The sequence spans 611 residues: MPPYRSRTTTHGRNMAGARGLWRATGMKDEDFGKPIIAVVNSFTQFVPGHVHLKDLGQLVAREIESAGGVAKEFNTIAVDDGIAMGHDGMLYSLPSRELIADSVEYMVNAHCADAMVCISNCDKITPGMLMAALRLNIPVVFVSGGPMEAGKVVWEDSVKKLDLVDAMVAAADDHYTDEQVKAIERSACPTCGSCSGMFTANSMNCLTEALGLSLPGNGSTLATHADRKRLFVEAGHLIVDLARRYYEQDDESVLPRSIATFSAFENAMTLDIAMGGSTNTVLHLLAAAQEAEIDFTMADIDRLSRRVPVLCKVAPAVSSVHMEDVHHAGGIMGILGQLDNAGLLTTSIPTVHSETLAKALDHWDVTRTNSEMVHKFYSAAPGGVPTQVAFSQERRFDKVDTDREKGVIRSKEHAFSQDGGLAVLYGNLAEDGCIVKTAGVDDSILKFSGPARIFESQDSAVLGILNGKIKPGDIVLIRYEGPRGGPGMQEMLYPTSYLKSKGFGKACALITDGRFSGGSSGLSIGHVSPEAAEGGTIGLVREGDIIDIDIPNRKIHLAVDDATLAERRAEQDAAGWKPAEERKRKISTALKAYAAMATSAARGAVRKLPD.

A Mg(2+)-binding site is contributed by Asp-81. A [2Fe-2S] cluster-binding site is contributed by Cys-122. Positions 123 and 124 each coordinate Mg(2+). An N6-carboxylysine modification is found at Lys-124. Cys-195 contacts [2Fe-2S] cluster. Position 491 (Glu-491) interacts with Mg(2+). Residue Ser-517 is the Proton acceptor of the active site.

The protein belongs to the IlvD/Edd family. As to quaternary structure, homodimer. Requires [2Fe-2S] cluster as cofactor. Mg(2+) is required as a cofactor.

The enzyme catalyses (2R)-2,3-dihydroxy-3-methylbutanoate = 3-methyl-2-oxobutanoate + H2O. It catalyses the reaction (2R,3R)-2,3-dihydroxy-3-methylpentanoate = (S)-3-methyl-2-oxopentanoate + H2O. Its pathway is amino-acid biosynthesis; L-isoleucine biosynthesis; L-isoleucine from 2-oxobutanoate: step 3/4. The protein operates within amino-acid biosynthesis; L-valine biosynthesis; L-valine from pyruvate: step 3/4. In terms of biological role, functions in the biosynthesis of branched-chain amino acids. Catalyzes the dehydration of (2R,3R)-2,3-dihydroxy-3-methylpentanoate (2,3-dihydroxy-3-methylvalerate) into 2-oxo-3-methylpentanoate (2-oxo-3-methylvalerate) and of (2R)-2,3-dihydroxy-3-methylbutanoate (2,3-dihydroxyisovalerate) into 2-oxo-3-methylbutanoate (2-oxoisovalerate), the penultimate precursor to L-isoleucine and L-valine, respectively. This Brucella canis (strain ATCC 23365 / NCTC 10854 / RM-666) protein is Dihydroxy-acid dehydratase.